Consider the following 159-residue polypeptide: Growth arrest and DNA damage-inducible protein GADD45 gamma (159 aa).

The segment at 43–86 (VYESAKVLNVDPDNVTFCVLAADEEDEGDIALQIHFTLIQAFCC) is homodimerization.

Belongs to the GADD45 family. Undergoes concentration-dependent homodimerization, which is required for growth inhibititory activity and enhances interaction with PCNA. Interacts with GADD45GIP1. Interacts with PCNA.

Functionally, involved in the regulation of growth and apoptosis. Mediates activation of stress-responsive MTK1/MEKK4 MAPKKK. This is Growth arrest and DNA damage-inducible protein GADD45 gamma (GADD45G) from Bos taurus (Bovine).